Here is a 537-residue protein sequence, read N- to C-terminus: Zinc finger and BTB domain-containing protein 18 (537 aa).

The 68-residue stretch at 24-91 (CDSTVLVGDA…MYEGKLQFKS (68 aa)) folds into the BTB domain. The segment covering 122 to 143 (TAEADSTKREEDTSSCSDKVES) has biased composition (basic and acidic residues). 2 disordered regions span residues 122 to 232 (TAEA…RVSA) and 335 to 355 (ASEL…LGGD). Low complexity-rich tracts occupy residues 182 to 195 (RLPS…TTSP) and 208 to 229 (SPAG…ASRR). 4 C2H2-type zinc fingers span residues 385–407 (FMCP…LSTH), 425–447 (PTCS…ERTH), 453–475 (YTCT…AVVH), and 481–504 (HACK…RKFH).

It belongs to the krueppel C2H2-type zinc-finger protein family. ZBTB18 subfamily.

The protein localises to the nucleus. In terms of biological role, transcriptional repressor that plays a role in various developmental processes. Specifically binds the consensus DNA sequence 5'-[AC]ACATCTG[GT][AC]-3' which contains the E box core, and acts by recruiting chromatin remodeling multiprotein complexes. The polypeptide is Zinc finger and BTB domain-containing protein 18 (zbtb18) (Danio rerio (Zebrafish)).